A 106-amino-acid chain; its full sequence is UPF0145 protein PP_2873 (106 aa).

The protein belongs to the UPF0145 family.

The protein is UPF0145 protein PP_2873 of Pseudomonas putida (strain ATCC 47054 / DSM 6125 / CFBP 8728 / NCIMB 11950 / KT2440).